The chain runs to 858 residues: DNA replication licensing factor mcm4-A (858 aa).

A disordered region spans residues 1 to 125; sequence MSSPTSTPSR…ARKVKQVDLH (125 aa). Polar residues-rich tracts occupy residues 54–68 and 79–94; these read SPSGDIQSPLFSSPA and LDLSSPLTYGTPSSRV. The segment at 301–326 adopts a C4-type zinc-finger fold; it reads CQVCAFTTRVEIDRGRIAEPSVCKHC. Residues 453–662 enclose the MCM domain; sequence IYERLAAALA…YDRRLAHHLV (210 aa). ATP is bound by residues tyrosine 466, arginine 492, lysine 511, serine 512, asparagine 613, arginine 638, arginine 727, and glutamate 730. An Arginine finger motif is present at residues 637-640; sequence SRFD.

This sequence belongs to the MCM family. As to quaternary structure, component of the mcm2-7 complex (RLF-M). The complex forms a toroidal hexameric ring with the proposed subunit order mcm2-mcm6-mcm4-mcm7-mcm3-mcm5. The heterodimer of mmcm3/mcm5 interacts with mcm4, mmcm6, mcm7 and weakly with mcm2. Component of the CMG helicase complex, composed of the mcm2-7 complex, the GINS complex and cdc45. In terms of processing, hyperphosphorylated during mitosis in a mechanism requiring cdc2-cyclin B and other kinases. Undergoes dephosphorylation after exiting mitosis, existing in a partially phosphorylated state in the cytosolic interphase mcm complex which associates with the pre-replication complexes (pre-Rcs). Complete dephosphorylation inactivates the mcm complex, preventing its binding to chromatin. Becomes actively phosphorylated during S phase once the mcm complex is assembled on the chromatin. This chromatin-associated phosphorylation occurs during the activation of the pre-Rcs and is independent of cdks. Phosphorylated by the cdc7-dbf4b complex.

Its subcellular location is the nucleus. The protein localises to the chromosome. The enzyme catalyses ATP + H2O = ADP + phosphate + H(+). Acts as a component of the MCM2-7 complex (MCM complex) which is the replicative helicase essential for 'once per cell cycle' DNA replication initiation and elongation in eukaryotic cells. Core component of CDC45-MCM-GINS (CMG) helicase, the molecular machine that unwinds template DNA during replication, and around which the replisome is built. The active ATPase sites in the MCM2-7 ring are formed through the interaction surfaces of two neighboring subunits such that a critical structure of a conserved arginine finger motif is provided in trans relative to the ATP-binding site of the Walker A box of the adjacent subunit. The six ATPase active sites, however, are likely to contribute differentially to the complex helicase activity. The polypeptide is DNA replication licensing factor mcm4-A (mcm4-a) (Xenopus laevis (African clawed frog)).